An 80-amino-acid chain; its full sequence is Metallothionein-like protein 1 (80 aa).

It belongs to the metallothionein superfamily. Type 15 family.

Functionally, metallothioneins have a high content of cysteine residues that bind various heavy metals. The sequence is that of Metallothionein-like protein 1 (METAL1) from Coffea arabica (Arabian coffee).